Reading from the N-terminus, the 53-residue chain is uncharacterized protein (53 aa).

The helical transmembrane segment at 20–42 (ILFPVLLVFDTILIVVGIALILF) threads the bilayer.

It is found in the membrane. This is an uncharacterized protein from Archaeoglobus fulgidus (strain ATCC 49558 / DSM 4304 / JCM 9628 / NBRC 100126 / VC-16).